The following is a 777-amino-acid chain: 1,4-alpha-glucan branching enzyme GlgB (777 aa).

Catalysis depends on Asp-408, which acts as the Nucleophile. The active-site Proton donor is the Glu-461.

It belongs to the glycosyl hydrolase 13 family. GlgB subfamily. Monomer.

The enzyme catalyses Transfers a segment of a (1-&gt;4)-alpha-D-glucan chain to a primary hydroxy group in a similar glucan chain.. It functions in the pathway glycan biosynthesis; glycogen biosynthesis. Catalyzes the formation of the alpha-1,6-glucosidic linkages in glycogen by scission of a 1,4-alpha-linked oligosaccharide from growing alpha-1,4-glucan chains and the subsequent attachment of the oligosaccharide to the alpha-1,6 position. The polypeptide is 1,4-alpha-glucan branching enzyme GlgB (Actinobacillus pleuropneumoniae serotype 3 (strain JL03)).